A 361-amino-acid polypeptide reads, in one-letter code: tRNA/tmRNA (uracil-C(5))-methyltransferase (361 aa).

Residues Gln-185, Tyr-213, Asn-218, Glu-234, and Asp-294 each contribute to the S-adenosyl-L-methionine site. The Nucleophile role is filled by Cys-319. The active-site Proton acceptor is the Glu-353.

This sequence belongs to the class I-like SAM-binding methyltransferase superfamily. RNA M5U methyltransferase family. TrmA subfamily.

The catalysed reaction is uridine(54) in tRNA + S-adenosyl-L-methionine = 5-methyluridine(54) in tRNA + S-adenosyl-L-homocysteine + H(+). The enzyme catalyses uridine(341) in tmRNA + S-adenosyl-L-methionine = 5-methyluridine(341) in tmRNA + S-adenosyl-L-homocysteine + H(+). Functionally, dual-specificity methyltransferase that catalyzes the formation of 5-methyluridine at position 54 (m5U54) in all tRNAs, and that of position 341 (m5U341) in tmRNA (transfer-mRNA). The chain is tRNA/tmRNA (uracil-C(5))-methyltransferase from Pseudomonas putida (strain GB-1).